The primary structure comprises 91 residues: Acylphosphatase (91 aa).

Positions 3–90 (RVSMIVSGQV…CGYSIFTIRR (88 aa)) constitute an Acylphosphatase-like domain. Active-site residues include R18 and N36.

Belongs to the acylphosphatase family.

The enzyme catalyses an acyl phosphate + H2O = a carboxylate + phosphate + H(+). In Methanospirillum hungatei JF-1 (strain ATCC 27890 / DSM 864 / NBRC 100397 / JF-1), this protein is Acylphosphatase (acyP).